Reading from the N-terminus, the 54-residue chain is MAVPKKKMSKSRRNSRKSNWKKKVLKKVLFALSLGKSFEANTNVNFSFGDKLPQ.

The tract at residues 1-20 is disordered; that stretch reads MAVPKKKMSKSRRNSRKSNW.

It belongs to the bacterial ribosomal protein bL32 family.

The protein resides in the plastid. The protein localises to the chloroplast. The protein is Large ribosomal subunit protein bL32c (rpl32) of Euglena gracilis.